Here is a 793-residue protein sequence, read N- to C-terminus: MKFSEAWLRTWVDPDISRETLVERLTLAGLEVESTEPVAAPFKGVKAARIVAVEPHPSAPRLQVCQVDIGSGSLLTVVCGAPNARAGLWAPLAIIGAQLPAGIRIELAKLQGVESFGMLCSAAELGLAEQSAGLLELPEGDFPGVDLHEFLQFDDISIEVDLTPNRSDCLSVAGIAREVGVLTQSPVTEPAIEPVTAQIGDIFPVTVTAPAACPRYLGRVLRGVNPQTQTPWWLRERLRRSGIRSLGLVVDVTNYVMLELGQPMHAFDLERLKGGIQVRYGQADEALTLLDGTHLRLDEETLIIADQQRALALAGIMGGEESGINNQTRHLFLESAFFNPSVIAGRARFYGLHTDSSHRFERGVDPELPRRAMERATALLLEIAGGQAGPVIEVADSSQLPPQATIILRKARIHRVLGVEIAESRITEQLTRLGLKVERIEEGWEVKVPSFRFDLALEVDLIEELGRLYGYDRLPSTRPVGQIQPVLKTEAGAFIDRIRQVLVDRDYQEAITYSFVDQELQQLLDPEGSPLVLNNPISTDMAVMRTTLWTGLVQALQYNSYRQQERIRFFEYGLTFNGQLADLKQERTIAGLISGASYPEQWGLVGRPADFFDLKGDVEAILSLVGEQRNCFEFMAASHPALHPGQSAQILREGQAVGWLGALHPWLESKLDLSSRAYLFSLQLEAVERGSLPVFQSLSKFPAIRRDIAFLVNANIPVQVVFDCLKGCESDILKEFQLFDVYTGKGIDPDKKSLALKLILQHPSYTLTDDRVNIFIERVMALLVTELGAIIRE.

The 110-residue stretch at 39 to 148 (AAPFKGVKAA…EGDFPGVDLH (110 aa)) folds into the tRNA-binding domain. The 76-residue stretch at 401–476 (PPQATIILRK…RLYGYDRLPS (76 aa)) folds into the B5 domain. Residues Asp454, Asp460, Glu463, and Glu464 each coordinate Mg(2+). Residues 699 to 792 (SKFPAIRRDI…LVTELGAIIR (94 aa)) enclose the FDX-ACB domain.

The protein belongs to the phenylalanyl-tRNA synthetase beta subunit family. Type 1 subfamily. In terms of assembly, tetramer of two alpha and two beta subunits. Mg(2+) is required as a cofactor.

It is found in the cytoplasm. The catalysed reaction is tRNA(Phe) + L-phenylalanine + ATP = L-phenylalanyl-tRNA(Phe) + AMP + diphosphate + H(+). This is Phenylalanine--tRNA ligase beta subunit from Nitrosococcus oceani (strain ATCC 19707 / BCRC 17464 / JCM 30415 / NCIMB 11848 / C-107).